The following is a 171-amino-acid chain: uncharacterized protein (171 aa).

Disordered stretches follow at residues 1 to 50 and 71 to 91; these read MSHR…THLS and RIDK…PMMK.

This is an uncharacterized protein from Caenorhabditis elegans.